A 101-amino-acid chain; its full sequence is Small ribosomal subunit protein uS14 (101 aa).

It belongs to the universal ribosomal protein uS14 family. Part of the 30S ribosomal subunit. Contacts proteins S3 and S10.

Its function is as follows. Binds 16S rRNA, required for the assembly of 30S particles and may also be responsible for determining the conformation of the 16S rRNA at the A site. The sequence is that of Small ribosomal subunit protein uS14 from Pseudomonas putida (strain GB-1).